The primary structure comprises 456 residues: Probable galactarate/D-glucarate transporter GudP (456 aa).

10 consecutive transmembrane segments (helical) span residues 11–31 (YLIL…RATI), 51–71 (YIFS…GWLL), 78–96 (KVYA…LQGY), 102–119 (ISTA…VGLA), 246–266 (IYLG…WFPV), 280–300 (GIIA…GGVI), 317–337 (TPIV…YVDA), 341–361 (VVCF…GWAV), 381–401 (FGNL…AATG), and 408–428 (SSWV…VGEI).

It belongs to the major facilitator superfamily. Phthalate permease family.

The protein localises to the cell inner membrane. The enzyme catalyses galactarate(in) + H(+)(in) = galactarate(out) + H(+)(out). It catalyses the reaction D-glucarate(in) + H(+)(in) = D-glucarate(out) + H(+)(out). In terms of biological role, probably involved in the uptake of galactarate and/or D-glucarate. This is Probable galactarate/D-glucarate transporter GudP (gudP) from Pseudomonas putida (Arthrobacter siderocapsulatus).